Here is a 224-residue protein sequence, read N- to C-terminus: Phosphoribosyltransferase domain-containing protein 1 (224 aa).

Residues Glu-140 and Asp-141 each contribute to the Mg(2+) site. GMP-binding positions include 140–148, Lys-172, 193–194, and Asp-200; these read EDIINTGRT and FV. Position 200 (Asp-200) interacts with Mg(2+).

Belongs to the purine/pyrimidine phosphoribosyltransferase family.

This Xenopus laevis (African clawed frog) protein is Phosphoribosyltransferase domain-containing protein 1 (prtfdc1).